The following is a 406-amino-acid chain: Bifunctional protein GlmU (406 aa).

Positions 1–221 (MFIILAAGHG…EEEATGINSR (221 aa)) are pyrophosphorylase. Residues 5 to 8 (LAAG), K19, Q68, 73 to 74 (GT), 98 to 100 (YGD), G134, E148, N162, and N219 each bind UDP-N-acetyl-alpha-D-glucosamine. D100 is a binding site for Mg(2+). N219 contributes to the Mg(2+) binding site. Residues 222–242 (NDLAKAEFYFQENRRKFFTDS) form a linker region. An N-acetyltransferase region spans residues 243 to 406 (GVTLVAPETV…RRKQMVKKIK (164 aa)). Residue K308 participates in UDP-N-acetyl-alpha-D-glucosamine binding. Residue H320 is the Proton acceptor of the active site. Residues Y323 and N334 each contribute to the UDP-N-acetyl-alpha-D-glucosamine site. Residues A337, 343 to 344 (NY), A380, and R397 each bind acetyl-CoA.

It in the N-terminal section; belongs to the N-acetylglucosamine-1-phosphate uridyltransferase family. This sequence in the C-terminal section; belongs to the transferase hexapeptide repeat family. In terms of assembly, homotrimer. The cofactor is Mg(2+).

The protein resides in the cytoplasm. It catalyses the reaction alpha-D-glucosamine 1-phosphate + acetyl-CoA = N-acetyl-alpha-D-glucosamine 1-phosphate + CoA + H(+). The catalysed reaction is N-acetyl-alpha-D-glucosamine 1-phosphate + UTP + H(+) = UDP-N-acetyl-alpha-D-glucosamine + diphosphate. It functions in the pathway nucleotide-sugar biosynthesis; UDP-N-acetyl-alpha-D-glucosamine biosynthesis; N-acetyl-alpha-D-glucosamine 1-phosphate from alpha-D-glucosamine 6-phosphate (route II): step 2/2. It participates in nucleotide-sugar biosynthesis; UDP-N-acetyl-alpha-D-glucosamine biosynthesis; UDP-N-acetyl-alpha-D-glucosamine from N-acetyl-alpha-D-glucosamine 1-phosphate: step 1/1. The protein operates within bacterial outer membrane biogenesis; LPS lipid A biosynthesis. Functionally, catalyzes the last two sequential reactions in the de novo biosynthetic pathway for UDP-N-acetylglucosamine (UDP-GlcNAc). The C-terminal domain catalyzes the transfer of acetyl group from acetyl coenzyme A to glucosamine-1-phosphate (GlcN-1-P) to produce N-acetylglucosamine-1-phosphate (GlcNAc-1-P), which is converted into UDP-GlcNAc by the transfer of uridine 5-monophosphate (from uridine 5-triphosphate), a reaction catalyzed by the N-terminal domain. The polypeptide is Bifunctional protein GlmU (Wolbachia sp. subsp. Brugia malayi (strain TRS)).